We begin with the raw amino-acid sequence, 25 residues long: Caerin 2.1 (25 aa).

In terms of tissue distribution, expressed by the skin dorsal glands.

The protein localises to the secreted. In terms of biological role, antibacterial peptide with narrow spectrum of activity. Active against the Gram-negative bacterium P.multocida (MIC=25 ug/ml). Inhibits the formation of NO by neuronal nitric oxide synthase with an IC(50) of 9 ug/ml. The chain is Caerin 2.1 from Litoria peronii (Emerald spotted tree frog).